A 710-amino-acid polypeptide reads, in one-letter code: Chaperonin-containing T-complex member BBS12 (710 aa).

Belongs to the TCP-1 chaperonin family. BBS12 subfamily. As to quaternary structure, component of the chaperonin-containing T-complex (TRiC), a heterooligomeric complex of about 850 to 900 kDa that forms two stacked rings, 12 to 16 nm in diameter. Interacts with MKKS.

The protein localises to the cell projection. It is found in the cilium. Component of the chaperonin-containing T-complex (TRiC), a molecular chaperone complex that assists the folding of proteins upon ATP hydrolysis. As part of the TRiC complex may play a role in the assembly of BBSome, a complex involved in ciliogenesis regulating transports vesicles to the cilia. Involved in adipogenic differentiation. The polypeptide is Chaperonin-containing T-complex member BBS12 (BBS12) (Homo sapiens (Human)).